Consider the following 630-residue polypeptide: Transposase B from transposon PsiTn554 (630 aa).

In terms of domain architecture, Core-binding (CB) spans 216–302 (TYFKQLVKRY…ILEGLFSTLH (87 aa)). Positions 326–513 (AKPRFIDEFV…FDETLKNEFT (188 aa)) constitute a Tyr recombinase domain. Residues Arg363, Lys391, His465, Arg468, and His491 contribute to the active site. Tyr500 acts as the O-(3'-phospho-DNA)-tyrosine intermediate in catalysis.

Belongs to the 'phage' integrase family.

This is Transposase B from transposon PsiTn554 (tnpB) from Staphylococcus aureus.